The sequence spans 331 residues: Cytosolic arginine sensor for mTORC1 subunit 1 (331 aa).

At S14 the chain carries Phosphoserine. The ACT 1 domain maps to 72-139; it reads AEATWLVMNV…SVVIHTLARE (68 aa). Position 110–111 (110–111) interacts with L-arginine; that stretch reads SV. The tract at residues 155-174 is disordered; that stretch reads GDDSSNGFPQAQHGPSPTVH. Residues 156–174 are compositionally biased toward polar residues; the sequence is DDSSNGFPQAQHGPSPTVH. Residues 262-322 enclose the ACT 2 domain; sequence WRMVRIGGQP…SCVIDILQRR (61 aa). L-arginine-binding positions include G273, 279-280, and 299-303; these read IV and TFNFD.

The protein belongs to the GATS family. Forms homodimers and heterodimers with CASTOR2. Interacts with the GATOR2 complex which is composed of MIOS, SEC13, SEH1L, WDR24 and WDR59; the interaction is negatively regulated by arginine. Interacts with TM4SF5; the interaction is positively regulated by leucine and is negatively regulated by arginine. Post-translationally, phosphorylation at Ser-14 by AKT1, promoting the interaction between CASTOR1 and RNF167. Ubiquitinated by RNF167 via 'Lys-29'-polyubiquitination, leading to its degradation, releasing the GATOR2 complex. Ubiquitination by RNF167 is promoted by phosphorylation at Ser-14 by AKT1.

It is found in the cytoplasm. The protein localises to the cytosol. Functions as an intracellular arginine sensor within the amino acid-sensing branch of the TORC1 signaling pathway. As a homodimer or a heterodimer with CASTOR2, binds and inhibits the GATOR subcomplex GATOR2 and thereby mTORC1. Binding of arginine to CASTOR1 allosterically disrupts the interaction of CASTOR1-containing dimers with GATOR2 which can in turn activate mTORC1 and the TORC1 signaling pathway. The protein is Cytosolic arginine sensor for mTORC1 subunit 1 of Rattus norvegicus (Rat).